The chain runs to 368 residues: Aminomethyltransferase (368 aa).

The protein belongs to the GcvT family. In terms of assembly, the glycine cleavage system is composed of four proteins: P, T, L and H.

It carries out the reaction N(6)-[(R)-S(8)-aminomethyldihydrolipoyl]-L-lysyl-[protein] + (6S)-5,6,7,8-tetrahydrofolate = N(6)-[(R)-dihydrolipoyl]-L-lysyl-[protein] + (6R)-5,10-methylene-5,6,7,8-tetrahydrofolate + NH4(+). Functionally, the glycine cleavage system catalyzes the degradation of glycine. This is Aminomethyltransferase from Thermoanaerobacter sp. (strain X514).